The chain runs to 134 residues: Small ribosomal subunit protein uS11 (134 aa).

It belongs to the universal ribosomal protein uS11 family. In terms of assembly, part of the 30S ribosomal subunit. Interacts with proteins S7 and S18. Binds to IF-3.

Its function is as follows. Located on the platform of the 30S subunit, it bridges several disparate RNA helices of the 16S rRNA. Forms part of the Shine-Dalgarno cleft in the 70S ribosome. The chain is Small ribosomal subunit protein uS11 from Corynebacterium jeikeium (strain K411).